The following is a 395-amino-acid chain: Zinc-regulated GTPase metalloprotein activator 1E (395 aa).

The disordered stretch occupies residues 1–22 (MLPAVGSVDEEEDPAEEDCPEL). The segment covering 8–20 (VDEEEDPAEEDCP) has biased composition (acidic residues). Residues 17–24 (EDCPELVP) carry the psi-PxLVp motif motif. 49–56 (GYLGAGKT) lines the GTP pocket. Zn(2+) is bound by residues Cys-107, Cys-109, and Cys-110. The CXCC motif motif lies at 107 to 110 (CLCC). GTP-binding positions include 110–114 (CSVKD) and 203–206 (NKTD). Positions 274–377 (IVTITFEVPG…ILKQLFIATV (104 aa)) constitute a CobW C-terminal domain.

This sequence belongs to the SIMIBI class G3E GTPase family. ZNG1 subfamily.

The protein resides in the nucleus. It carries out the reaction GTP + H2O = GDP + phosphate + H(+). Functionally, zinc chaperone that directly transfers zinc cofactor to target metalloproteins, thereby activating them. Catalyzes zinc insertion into the active site of methionine aminopeptidase METAP1, which function to cleave the initiator methionine from polypeptides during or after protein translation. Mechanistically, the N-terminal psi-PxLVp motif binds to the C6H2-type zinc finger of inactive form of METAP1. After formation of the docked complex, zinc is transferred from the CXCC motif in the GTPase domain of ZNG1E to the zinc binding site in the peptidase domain of METAP1 in a process requiring GTP hydrolysis. GTP/GDP exchange is required for release of active METAP1. In Homo sapiens (Human), this protein is Zinc-regulated GTPase metalloprotein activator 1E.